A 1588-amino-acid chain; its full sequence is Autotransporter adhesin EhaG (1588 aa).

Positions 1-53 (MNKIFKVIWNPATGNYTVTSETAKSRGKKSGRSKLLISALVAGGMLSSFGALA) are cleaved as a signal peptide. A surface exposed passenger domain region spans residues 54 to 1499 (NAGNDNGQGV…QETKQYTDQR (1446 aa)). A translocator domain region spans residues 1500–1588 (MVEMDNKLSK…SAALGAGIQW (89 aa)). 4 beta stranded membrane-spanning segments follow: residues 1534 to 1544 (GASMASIGGGT), 1548 to 1558 (ESAVALGVSMV), 1567 to 1573 (KLQGSTN), and 1577 to 1588 (EYSAALGAGIQW).

It belongs to the autotransporter-2 (AT-2) (TC 1.B.40) family. In terms of assembly, homotrimer.

The protein resides in the cell surface. Its subcellular location is the cell outer membrane. Mediates aggregation, biofilm formation and adhesion to a range of extracellular matrix (ECM) proteins, such as fibronectin, fibrinogen, laminin and collagen types I, II, III, and V. Mediates adhesion to intestinal epithelial cells. The protein is Autotransporter adhesin EhaG of Escherichia coli O157:H7.